Reading from the N-terminus, the 151-residue chain is Probable ribonuclease P/MRP protein subunit POP5 (151 aa).

This sequence belongs to the eukaryotic/archaeal RNase P protein component 2 family. Component of nuclear RNase P and RNase MRP ribonucleoproteins. Interacts with GAF1/RPP30.

Its subcellular location is the nucleus. It is found in the nucleolus. Essential protein required during embryogenesis. Component of ribonuclease P, a protein complex that generates mature tRNA molecules by cleaving their 5'-ends. Also a component of RNase MRP. The sequence is that of Probable ribonuclease P/MRP protein subunit POP5 (EMB1687) from Arabidopsis thaliana (Mouse-ear cress).